The primary structure comprises 236 residues: MTKLDAKSIINYIGNAPKKTPVKVFIKGQLDQIDFPEEIENFNETHSGVIFGDWKDVEPFLKENQDKIQDYRIENNARNSAVPMIDMKKFDARIEPGAIIRDQVAIGKNAVIMMGAIINIGAEIGDDTMIDMGVVLGGRAIVGKHCHIGAGSVLAGVIEPASATPVKIDDNVVMGANAVVIEGVHVGEGAVIAAGAVVTHDVEPHTMVAGVPAKVIKKVDDQTESKTGLEDNLRKI.

Belongs to the transferase hexapeptide repeat family. DapH subfamily.

It catalyses the reaction (S)-2,3,4,5-tetrahydrodipicolinate + acetyl-CoA + H2O = L-2-acetamido-6-oxoheptanedioate + CoA. It functions in the pathway amino-acid biosynthesis; L-lysine biosynthesis via DAP pathway; LL-2,6-diaminopimelate from (S)-tetrahydrodipicolinate (acetylase route): step 1/3. Functionally, catalyzes the transfer of an acetyl group from acetyl-CoA to tetrahydrodipicolinate. The chain is 2,3,4,5-tetrahydropyridine-2,6-dicarboxylate N-acetyltransferase from Lactobacillus helveticus (strain DPC 4571).